A 163-amino-acid polypeptide reads, in one-letter code: Nucleotide-binding protein MT0592 (163 aa).

This sequence belongs to the YajQ family.

Functionally, nucleotide-binding protein. The polypeptide is Nucleotide-binding protein MT0592 (Mycobacterium tuberculosis (strain CDC 1551 / Oshkosh)).